A 569-amino-acid chain; its full sequence is Peptide transporter PTR_C (569 aa).

A compositionally biased stretch (basic and acidic residues) spans 1 to 25 (MSQNVDEKVVHDDASVIRSVDRSES). The interval 1–43 (MSQNVDEKVVHDDASVIRSVDRSESDSYPDSVSPEGAEPSEEE) is disordered. The helical transmembrane segment at 54 to 74 (VPLACWLVAIVELAERFSYYG) threads the bilayer. Residue N98 is glycosylated (N-linked (GlcNAc...) asparagine). Transmembrane regions (helical) follow at residues 104 to 124 (ALSY…AWVA), 134 to 154 (ISIF…TSLP), and 159 to 179 (NTSL…TGGV). N-linked (GlcNAc...) asparagine glycosylation is present at N212. A run of 8 helical transmembrane segments spans residues 215–235 (IQNV…SVIA), 245–265 (FWAA…ALFL), 322–342 (ALYA…YGQM), 366–386 (IDSI…YPFI), 398–418 (IFWG…LQHF), 444–464 (VALQ…ASIT), 479–499 (SFIM…GIAL), and 510–530 (WTYT…WFLF).

It belongs to the major facilitator superfamily. Proton-dependent oligopeptide transporter (POT/PTR) (TC 2.A.17) family.

It is found in the cell membrane. The catalysed reaction is a dipeptide(out) + H(+)(out) = a dipeptide(in) + H(+)(in). It carries out the reaction an L-amino acid tripeptide(out) + H(+)(out) = an L-amino acid tripeptide(in) + H(+)(in). Its function is as follows. Peptide transporter that exploits the inwardly directed proton motive force to facilitate the cellular uptake of di/tripeptides. Shows strong uptake specificity towards the dipeptides Tyr-Phe and Leu-Gly and the tripeptide Phe-Gly-Gly, when compared to PTR_A and PTR_B. Also able to import peptide-based antifungals such as the peptide-nucleoside drug nikkomycin Z as well as the glucosamine-6-phosphate synthase inhibitor, L-norvalyl-N3-(4-methoxyfumaroyl)-L-2,3-diaminopropionoic acid (Nva-FMDP). This chain is Peptide transporter PTR_C, found in Candidozyma auris (Yeast).